A 115-amino-acid polypeptide reads, in one-letter code: uncharacterized protein (115 aa).

3 helical membrane-spanning segments follow: residues leucine 23 to alanine 43, alanine 63 to valine 83, and asparagine 90 to alanine 110.

It is found in the cell membrane. This is an uncharacterized protein from Mycobacterium bovis (strain ATCC BAA-935 / AF2122/97).